Reading from the N-terminus, the 507-residue chain is Histidine ammonia-lyase (507 aa).

The segment at residues 141-143 is a cross-link (5-imidazolinone (Ala-Gly)); the sequence is ASG. At Ser-142 the chain carries 2,3-didehydroalanine (Ser).

The protein belongs to the PAL/histidase family. Post-translationally, contains an active site 4-methylidene-imidazol-5-one (MIO), which is formed autocatalytically by cyclization and dehydration of residues Ala-Ser-Gly.

It is found in the cytoplasm. It carries out the reaction L-histidine = trans-urocanate + NH4(+). The protein operates within amino-acid degradation; L-histidine degradation into L-glutamate; N-formimidoyl-L-glutamate from L-histidine: step 1/3. This chain is Histidine ammonia-lyase, found in Burkholderia vietnamiensis (strain G4 / LMG 22486) (Burkholderia cepacia (strain R1808)).